The chain runs to 318 residues: Acetyl-coenzyme A carboxylase carboxyl transferase subunit alpha (318 aa).

Positions leucine 39 to aspartate 292 constitute a CoA carboxyltransferase C-terminal domain.

It belongs to the AccA family. In terms of assembly, acetyl-CoA carboxylase is a heterohexamer composed of biotin carboxyl carrier protein (AccB), biotin carboxylase (AccC) and two subunits each of ACCase subunit alpha (AccA) and ACCase subunit beta (AccD).

The protein localises to the cytoplasm. It catalyses the reaction N(6)-carboxybiotinyl-L-lysyl-[protein] + acetyl-CoA = N(6)-biotinyl-L-lysyl-[protein] + malonyl-CoA. Its pathway is lipid metabolism; malonyl-CoA biosynthesis; malonyl-CoA from acetyl-CoA: step 1/1. Component of the acetyl coenzyme A carboxylase (ACC) complex. First, biotin carboxylase catalyzes the carboxylation of biotin on its carrier protein (BCCP) and then the CO(2) group is transferred by the carboxyltransferase to acetyl-CoA to form malonyl-CoA. This is Acetyl-coenzyme A carboxylase carboxyl transferase subunit alpha from Gluconacetobacter diazotrophicus (strain ATCC 49037 / DSM 5601 / CCUG 37298 / CIP 103539 / LMG 7603 / PAl5).